The following is a 158-amino-acid chain: C-type lectin BiL (158 aa).

Positions 1-23 (MGRFIFVSFGLLVVFLSLSGAKG) are cleaved as a signal peptide. Cystine bridges form between Cys26/Cys37, Cys54/Cys154, Cys61/Cys156, and Cys129/Cys146. One can recognise a C-type lectin domain in the interval 33-155 (MNGLCYKIFD…CESKNAFLCQ (123 aa)). Residues Gln119, Asp121, Glu127, Asn142, and Asp143 each contribute to the Ca(2+) site. Residues 119 to 121 (QPD) carry the Galactose-binding motif.

As to quaternary structure, homodimer; disulfide-linked. Expressed by the venom gland.

It localises to the secreted. Lectin with a hemagglutinating activity that is inhibited by galactose, lactose and EDTA. Is calcium-dependent. Shows effects on the renal function of isolated perfused rat kidneys by increasing both perfusion pressure (PP) and renal vascular resistance (RVR). In addition, the urinary flow and glomerular filtration rate (GFR) decreases significantly. The changes observed may reflect direct injury to the glomerular and tubular renal cells, and the rise in permeability in the glomerular endothelial cells, may be the effect of interactions of C-type lectin with endothelial cells or due to release of other mediators by mesangial, tubular and endothelial cells. The protein is C-type lectin BiL of Bothrops insularis (Golden lancehead).